The chain runs to 644 residues: Protein cueball (644 aa).

A signal peptide spans 1-26; sequence MIRIRFGMDVLLVLLLATCLLSPTHG. Residues 27–531 lie on the Extracellular side of the membrane; that stretch reads TPLEWDFAVT…VCLTPTVWTS (505 aa). N-linked (GlcNAc...) asparagine glycosylation is found at N82 and N108. LDL-receptor class B repeat units lie at residues 121-166, 167-211, and 212-257; these read TNLF…DVCR, RKLY…DQLS, and DRLF…TNDA. N-linked (GlcNAc...) asparagine glycans are attached at residues N175 and N190. N313 is a glycosylation site (N-linked (GlcNAc...) asparagine). 2 EGF-like domains span residues 398-430 and 433-471; these read EIRE…FTGE and EVSV…ARCE. Disulfide bonds link C402–C411, C406–C421, C437–C447, C441–C459, and C461–C470. Residues N473 and N508 are each glycosylated (N-linked (GlcNAc...) asparagine). The helical transmembrane segment at 532 to 552 threads the bilayer; it reads SVIIILVVGIVSSLLLVAVIV. At 553-644 the chain is on the cytoplasmic side; the sequence is HGIRRLYKPK…LIHNMEDDLY (92 aa).

The protein belongs to the cueball family.

It localises to the cell membrane. Its function is as follows. Has a role in spermatogenesis and oogenesis. The protein is Protein cueball of Drosophila yakuba (Fruit fly).